Reading from the N-terminus, the 34-residue chain is Potassium channel toxin alpha-KTx 6.17 (34 aa).

Intrachain disulfides connect C3/C24, C9/C29, C13/C31, and C19/C34.

This sequence belongs to the short scorpion toxin superfamily. Potassium channel inhibitor family. Alpha-KTx 06 subfamily. As to expression, expressed by the venom gland.

It localises to the secreted. Its function is as follows. This toxin reversibly blocks Shaker B potassium-channels (expressed in insect Sf9 cells) with a Kd of 96.6 nM, and presents an even better affinity toward hKv1.3 (KCNA3), blocking it with a Kd of 17.7 nM. The protein is Potassium channel toxin alpha-KTx 6.17 of Opisthacanthus cayaporum (South American scorpion).